Reading from the N-terminus, the 390-residue chain is Galactokinase (390 aa).

33-36 (EHTD) lines the substrate pocket. Residues serine 67 and 124–130 (GSGLSSS) each bind ATP. 2 residues coordinate Mg(2+): serine 130 and glutamate 162. Aspartate 174 (proton acceptor) is an active-site residue. Substrate is bound at residue tyrosine 224.

This sequence belongs to the GHMP kinase family. GalK subfamily.

Its subcellular location is the cytoplasm. It catalyses the reaction alpha-D-galactose + ATP = alpha-D-galactose 1-phosphate + ADP + H(+). Its pathway is carbohydrate metabolism; galactose metabolism. In terms of biological role, catalyzes the transfer of the gamma-phosphate of ATP to D-galactose to form alpha-D-galactose-1-phosphate (Gal-1-P). The protein is Galactokinase of Streptococcus mutans serotype c (strain ATCC 700610 / UA159).